The following is a 64-amino-acid chain: H/ACA ribonucleoprotein complex subunit 3-like protein (64 aa).

Belongs to the NOP10 family. As to quaternary structure, component of the small nucleolar ribonucleoprotein particles containing H/ACA-type snoRNAs (H/ACA snoRNPs).

It is found in the nucleus. It localises to the nucleolus. Functionally, required for ribosome biogenesis. Part of a complex which catalyzes pseudouridylation of rRNA. This involves the isomerization of uridine such that the ribose is subsequently attached to C5, instead of the normal N1. Pseudouridine ('psi') residues may serve to stabilize the conformation of rRNAs. The protein is H/ACA ribonucleoprotein complex subunit 3-like protein of Arabidopsis thaliana (Mouse-ear cress).